Here is a 130-residue protein sequence, read N- to C-terminus: Ribosome-binding factor A (130 aa).

Belongs to the RbfA family. In terms of assembly, monomer. Binds 30S ribosomal subunits, but not 50S ribosomal subunits or 70S ribosomes.

Its subcellular location is the cytoplasm. Functionally, one of several proteins that assist in the late maturation steps of the functional core of the 30S ribosomal subunit. Associates with free 30S ribosomal subunits (but not with 30S subunits that are part of 70S ribosomes or polysomes). Required for efficient processing of 16S rRNA. May interact with the 5'-terminal helix region of 16S rRNA. In Methylibium petroleiphilum (strain ATCC BAA-1232 / LMG 22953 / PM1), this protein is Ribosome-binding factor A.